Consider the following 237-residue polypeptide: Uridylate kinase (237 aa).

An ATP-binding site is contributed by 11 to 14 (KLSG). G53 is a UMP binding site. G54 and R58 together coordinate ATP. Residues D73 and 134 to 141 (TGNPFFTT) each bind UMP. ATP contacts are provided by T161, Y167, and D170.

This sequence belongs to the UMP kinase family. In terms of assembly, homohexamer.

The protein localises to the cytoplasm. It catalyses the reaction UMP + ATP = UDP + ADP. It participates in pyrimidine metabolism; CTP biosynthesis via de novo pathway; UDP from UMP (UMPK route): step 1/1. Its activity is regulated as follows. Inhibited by UTP. Its function is as follows. Catalyzes the reversible phosphorylation of UMP to UDP. The chain is Uridylate kinase from Burkholderia mallei (strain NCTC 10247).